The chain runs to 550 residues: Probable asparagine synthetase [glutamine-hydrolyzing] (550 aa).

Residue cysteine 2 is the For GATase activity of the active site. Positions cysteine 2–serine 189 constitute a Glutamine amidotransferase type-2 domain. Residues arginine 53–methionine 57, asparagine 78–glutamate 80, and aspartate 100 contribute to the L-glutamine site. Positions tyrosine 213–tyrosine 530 constitute an Asparagine synthetase domain. Residues leucine 256, valine 284, and serine 360–glycine 361 each bind ATP.

The enzyme catalyses L-aspartate + L-glutamine + ATP + H2O = L-asparagine + L-glutamate + AMP + diphosphate + H(+). It participates in amino-acid biosynthesis; L-asparagine biosynthesis; L-asparagine from L-aspartate (L-Gln route): step 1/1. The sequence is that of Probable asparagine synthetase [glutamine-hydrolyzing] from Acanthamoeba polyphaga mimivirus (APMV).